We begin with the raw amino-acid sequence, 205 residues long: MAVRVKICGITRVDDLHAACDAGADALGFVFYEKSPRHLTLDAAAALLREVPPFVQTVGLFVDANPAFVDSVLRAVPLDLLQFHGDEKPADCARHGRPWIKAIRVRADTDLLKCAADFAAASGLLLDAYVPGVPGGTGARFDWRLIPPRLPQRVILSGGLTPDNVADAVRRVRPWAVDVSSGVEAAKGIKDAQKIARFISQAKAS.

This sequence belongs to the TrpF family.

It carries out the reaction N-(5-phospho-beta-D-ribosyl)anthranilate = 1-(2-carboxyphenylamino)-1-deoxy-D-ribulose 5-phosphate. It functions in the pathway amino-acid biosynthesis; L-tryptophan biosynthesis; L-tryptophan from chorismate: step 3/5. The sequence is that of N-(5'-phosphoribosyl)anthranilate isomerase from Thiobacillus denitrificans (strain ATCC 25259 / T1).